Consider the following 64-residue polypeptide: Potassium channel toxin kappa-KTx 4.1 (64 aa).

The signal sequence occupies residues methionine 1–alanine 26. The propeptide occupies glutamate 27 to glutamate 38. Disulfide bonds link cysteine 43–cysteine 61 and cysteine 47–cysteine 57.

This sequence belongs to the short scorpion toxin superfamily. Potassium channel inhibitor kappa-KTx family. Kappa-KTx 4 subfamily. As to expression, expressed by the venom gland.

The protein resides in the secreted. Potassium channel inhibitor (Kv). The sequence is that of Potassium channel toxin kappa-KTx 4.1 from Heterometrus petersii (Asian forest scorpion).